Consider the following 73-residue polypeptide: Translation initiation factor IF-1 (73 aa).

Positions 1–72 constitute an S1-like domain; the sequence is MAKEDVIEVE…TKGRITYRFI (72 aa).

The protein belongs to the IF-1 family. In terms of assembly, component of the 30S ribosomal translation pre-initiation complex which assembles on the 30S ribosome in the order IF-2 and IF-3, IF-1 and N-formylmethionyl-tRNA(fMet); mRNA recruitment can occur at any time during PIC assembly.

The protein localises to the cytoplasm. Functionally, one of the essential components for the initiation of protein synthesis. Stabilizes the binding of IF-2 and IF-3 on the 30S subunit to which N-formylmethionyl-tRNA(fMet) subsequently binds. Helps modulate mRNA selection, yielding the 30S pre-initiation complex (PIC). Upon addition of the 50S ribosomal subunit IF-1, IF-2 and IF-3 are released leaving the mature 70S translation initiation complex. The chain is Translation initiation factor IF-1 from Lactobacillus johnsonii (strain CNCM I-12250 / La1 / NCC 533).